Here is a 189-residue protein sequence, read N- to C-terminus: Probable nicotinate-nucleotide adenylyltransferase (189 aa).

Belongs to the NadD family.

It catalyses the reaction nicotinate beta-D-ribonucleotide + ATP + H(+) = deamido-NAD(+) + diphosphate. The protein operates within cofactor biosynthesis; NAD(+) biosynthesis; deamido-NAD(+) from nicotinate D-ribonucleotide: step 1/1. In terms of biological role, catalyzes the reversible adenylation of nicotinate mononucleotide (NaMN) to nicotinic acid adenine dinucleotide (NaAD). This is Probable nicotinate-nucleotide adenylyltransferase from Hydrogenobaculum sp. (strain Y04AAS1).